We begin with the raw amino-acid sequence, 319 residues long: Lipoyl synthase (319 aa).

The segment at 5–31 is disordered; the sequence is LDTISANPVRPRHPEKANRPDALSPPK. [4Fe-4S] cluster contacts are provided by cysteine 61, cysteine 66, cysteine 72, cysteine 87, cysteine 91, cysteine 94, and serine 300. Positions 73–289 constitute a Radical SAM core domain; the sequence is WDKKHATFMI…ETVAYTKGFL (217 aa).

It belongs to the radical SAM superfamily. Lipoyl synthase family. The cofactor is [4Fe-4S] cluster.

The protein resides in the cytoplasm. It carries out the reaction [[Fe-S] cluster scaffold protein carrying a second [4Fe-4S](2+) cluster] + N(6)-octanoyl-L-lysyl-[protein] + 2 oxidized [2Fe-2S]-[ferredoxin] + 2 S-adenosyl-L-methionine + 4 H(+) = [[Fe-S] cluster scaffold protein] + N(6)-[(R)-dihydrolipoyl]-L-lysyl-[protein] + 4 Fe(3+) + 2 hydrogen sulfide + 2 5'-deoxyadenosine + 2 L-methionine + 2 reduced [2Fe-2S]-[ferredoxin]. It participates in protein modification; protein lipoylation via endogenous pathway; protein N(6)-(lipoyl)lysine from octanoyl-[acyl-carrier-protein]: step 2/2. In terms of biological role, catalyzes the radical-mediated insertion of two sulfur atoms into the C-6 and C-8 positions of the octanoyl moiety bound to the lipoyl domains of lipoate-dependent enzymes, thereby converting the octanoylated domains into lipoylated derivatives. In Nitrobacter winogradskyi (strain ATCC 25391 / DSM 10237 / CIP 104748 / NCIMB 11846 / Nb-255), this protein is Lipoyl synthase.